The sequence spans 384 residues: Alanine racemase (384 aa).

Lys42 functions as the Proton acceptor; specific for D-alanine in the catalytic mechanism. Lys42 carries the post-translational modification N6-(pyridoxal phosphate)lysine. Arg140 serves as a coordination point for substrate. The active-site Proton acceptor; specific for L-alanine is the Tyr271. Met319 is a substrate binding site.

It belongs to the alanine racemase family. In terms of assembly, homodimer. The cofactor is pyridoxal 5'-phosphate.

It carries out the reaction L-alanine = D-alanine. The protein operates within amino-acid biosynthesis; D-alanine biosynthesis; D-alanine from L-alanine: step 1/1. Catalyzes the interconversion of L-alanine and D-alanine. This Mycobacterium tuberculosis (strain CDC 1551 / Oshkosh) protein is Alanine racemase (alr).